The sequence spans 129 residues: Glycine cleavage system H protein (129 aa).

The Lipoyl-binding domain maps to 24–106 (LLKIGVSEFA…IGDGWLVILK (83 aa)). The residue at position 65 (Lys-65) is an N6-lipoyllysine.

It belongs to the GcvH family. In terms of assembly, the glycine cleavage system is composed of four proteins: P, T, L and H. Requires (R)-lipoate as cofactor.

Functionally, the glycine cleavage system catalyzes the degradation of glycine. The H protein shuttles the methylamine group of glycine from the P protein to the T protein. The protein is Glycine cleavage system H protein of Prochlorococcus marinus (strain MIT 9301).